We begin with the raw amino-acid sequence, 365 residues long: MRVLAAMSGGVDSAVAAARAVDAGHEVVGVHMALNRSPGTLRTGSRGCCTIEDALDARRAADLLGIPFYVWDLSEDFVEDVVADFVAEYAAGRTPNPCVRCNERIKFAALLDKGIALGFDAVATGHYARVVTGPDGRAELHRAADAAKDQSYVLAVLDADQVAHAMFPLGDAPTKAEVRAEAERRGLPVASKPDSHDICFIPDGDTRGFLADKLGEVPGEVVDESGEVLGTHTGTYGYTVGQRKGLGISRPAADGRPRYVLSIEPVRRTVTVGPAERLSVGALEAVEAVWNADAPVGPVEVHVQVRAHGEPVPAVAELTGPADDPVLRVRLRTPLSGVAPGQTVAVYRGTRVLGSATISGTTPLS.

Residues 6–13 (AMSGGVDS) and Met-32 contribute to the ATP site. The Nucleophile role is filled by Cys-101. Cysteines 101 and 199 form a disulfide. Gly-125 is an ATP binding site. The segment at 148–150 (KDQ) is interaction with tRNA. Cys-199 acts as the Cysteine persulfide intermediate in catalysis.

The protein belongs to the MnmA/TRMU family.

The protein resides in the cytoplasm. It catalyses the reaction S-sulfanyl-L-cysteinyl-[protein] + uridine(34) in tRNA + AH2 + ATP = 2-thiouridine(34) in tRNA + L-cysteinyl-[protein] + A + AMP + diphosphate + H(+). In terms of biological role, catalyzes the 2-thiolation of uridine at the wobble position (U34) of tRNA, leading to the formation of s(2)U34. The protein is tRNA-specific 2-thiouridylase MnmA of Kineococcus radiotolerans (strain ATCC BAA-149 / DSM 14245 / SRS30216).